Reading from the N-terminus, the 543-residue chain is Probable malate:quinone oxidoreductase (543 aa).

Belongs to the MQO family. FAD serves as cofactor.

The catalysed reaction is (S)-malate + a quinone = a quinol + oxaloacetate. It participates in carbohydrate metabolism; tricarboxylic acid cycle; oxaloacetate from (S)-malate (quinone route): step 1/1. The chain is Probable malate:quinone oxidoreductase from Acinetobacter baylyi (strain ATCC 33305 / BD413 / ADP1).